The following is a 211-amino-acid chain: FMN-dependent NADH:quinone oxidoreductase (211 aa).

Residues 17 to 19, 102 to 105, and 146 to 149 each bind FMN; these read SNS, MWNL, and SRGG.

Belongs to the azoreductase type 1 family. As to quaternary structure, homodimer. It depends on FMN as a cofactor.

The enzyme catalyses 2 a quinone + NADH + H(+) = 2 a 1,4-benzosemiquinone + NAD(+). The catalysed reaction is N,N-dimethyl-1,4-phenylenediamine + anthranilate + 2 NAD(+) = 2-(4-dimethylaminophenyl)diazenylbenzoate + 2 NADH + 2 H(+). Quinone reductase that provides resistance to thiol-specific stress caused by electrophilic quinones. Functionally, also exhibits azoreductase activity. Catalyzes the reductive cleavage of the azo bond in aromatic azo compounds to the corresponding amines. The chain is FMN-dependent NADH:quinone oxidoreductase from Macrococcus caseolyticus (strain JCSC5402) (Macrococcoides caseolyticum).